Reading from the N-terminus, the 88-residue chain is MANTAQARKRARQAVVQNAHNSALRSRLRTAVKAVRKAIAGGDKAAAANVFKQAQSTIDSIADKKIVHKNKAARAKSRLSAAIKAMGA.

The tract at residues 1–20 is disordered; it reads MANTAQARKRARQAVVQNAH.

It belongs to the bacterial ribosomal protein bS20 family.

In terms of biological role, binds directly to 16S ribosomal RNA. The polypeptide is Small ribosomal subunit protein bS20 (Ralstonia nicotianae (strain ATCC BAA-1114 / GMI1000) (Ralstonia solanacearum)).